A 378-amino-acid polypeptide reads, in one-letter code: Erythronate-4-phosphate dehydrogenase (378 aa).

2 residues coordinate substrate: serine 45 and threonine 66. The NAD(+) site is built by aspartate 146 and threonine 175. Arginine 208 is an active-site residue. Aspartate 232 lines the NAD(+) pocket. Glutamate 237 is a catalytic residue. The active-site Proton donor is the histidine 254. Glycine 257 is an NAD(+) binding site. Tyrosine 258 is a substrate binding site.

It belongs to the D-isomer specific 2-hydroxyacid dehydrogenase family. PdxB subfamily. Homodimer.

The protein localises to the cytoplasm. The catalysed reaction is 4-phospho-D-erythronate + NAD(+) = (R)-3-hydroxy-2-oxo-4-phosphooxybutanoate + NADH + H(+). Its pathway is cofactor biosynthesis; pyridoxine 5'-phosphate biosynthesis; pyridoxine 5'-phosphate from D-erythrose 4-phosphate: step 2/5. In terms of biological role, catalyzes the oxidation of erythronate-4-phosphate to 3-hydroxy-2-oxo-4-phosphonooxybutanoate. This chain is Erythronate-4-phosphate dehydrogenase, found in Escherichia coli (strain ATCC 8739 / DSM 1576 / NBRC 3972 / NCIMB 8545 / WDCM 00012 / Crooks).